The following is a 706-amino-acid chain: Forkhead box protein P2 (706 aa).

The segment covering 1–28 (MMQESATETISNSSMNQNGMSTLSSQLD) has biased composition (polar residues). Disordered regions lie at residues 1-45 (MMQE…SEVS) and 275-305 (IKHGGLDLTTNISSSTTSTTTSKASPPITHH). Low complexity predominate over residues 287-296 (SSSTTSTTTS). The C2H2-type zinc finger occupies 337 to 362 (GVCKWPGCENICEDFGQFLKHLNNEH). Positions 379-400 (VQQLEIQLSKERERLQAMMTHL) are leucine-zipper. The ctbp1-binding stretch occupies residues 413 to 417 (PLNLV). A DNA-binding region (fork-head) is located at residues 495–585 (RPPFTYATLI…SQKITASPTL (91 aa)). The tract at residues 672–706 (DDEDCPMSLVTTANHSPELEEDRELEEEPLSEDLE) is disordered. The segment covering 690 to 706 (LEEDRELEEEPLSEDLE) has biased composition (acidic residues).

Dimerization is required for DNA-binding. In terms of tissue distribution, at stage 15, expressed in the anterior/superior eye field and the caudal branchial arch. At later stages, expression persists in the retina and in the caudal branchial arch. Expressed in the pronephros and the tip of the tail. Beginning with stage 35, expression in the brain is localized to distinct subdomains of the anterior prosencephalon, the medial mesencephalon and to lateral domains of the hindbrain.

It is found in the nucleus. Transcriptional repressor. The protein is Forkhead box protein P2 of Xenopus laevis (African clawed frog).